The chain runs to 423 residues: F-box/LRR-repeat protein 2 (423 aa).

Positions 9-55 (GRINKKLPKELLLRIFSFLDIVTLCRCAQISKAWNILALDGSNWQRI) constitute an F-box domain. 13 LRR repeats span residues 61–87 (QTDV…SLRG), 88–113 (CIGV…NLNG), 114–139 (CTKI…DLTS), 140–165 (CVSI…NLSW), 166–191 (CDQI…LLRG), 192–217 (CTQL…NLQS), 218–243 (CSRI…CLSG), 244–269 (CSNL…EAAR), 270–295 (CSHL…DLEE), 296–321 (CILI…SLSH), 322–350 (CELI…ELDN), 351–375 (CLLI…ELYD), and 376–401 (CQQV…AYFA). The segment at 80–90 (LRKLSLRGCIG) is interaction with Calmodulin. Residue Lys-201 forms a Glycyl lysine isopeptide (Lys-Gly) (interchain with G-Cter in ubiquitin) linkage. Thr-404 is subject to Phosphothreonine. Cys-420 carries the S-geranylgeranyl cysteine lipid modification. A CAAX motif motif is present at residues 420–423 (CVIL).

In terms of assembly, part of the SCF (SKP1-CUL1-F-box) E3 ubiquitin-protein ligase complex SCF(FBXL2) composed of CUL1, SKP1, RBX1 and FBXL2. Interacts with calmodulin; may antagonize substrate ubiquitination by SCF(FBXL2). May interact with PIK3R1. Interacts with PTPN13. Phosphorylated by GSK-beta (GSK3B), promoting recognition by FBXO3, leading to its ubiquitination by the SCF(FBXO3) complex. In terms of processing, ubiquitinated at Lys-201 by the SCF(FBXO3) complex in response to lipopolysaccharide (LPS), leading to its degradation by the proteasome.

The protein localises to the membrane. Its pathway is protein modification; protein ubiquitination. Calcium-activated substrate recognition component of the SCF (SKP1-cullin-F-box protein) E3 ubiquitin-protein ligase complex, SCF(FBXL2), which mediates the ubiquitination and subsequent proteasomal degradation of target proteins. Unlike many F-box proteins, FBXL2 does not seem to target phosphodegron within its substrates but rather calmodulin-binding motifs and is thereby antagonized by calmodulin. This is the case for the cyclins CCND2 and CCND3 which polyubiquitination and subsequent degradation are inhibited by calmodulin. Through CCND2 and CCND3 degradation induces cell-cycle arrest in G(0). SCF(FBXL2) also mediates PIK3R2 ubiquitination and proteasomal degradation thereby regulating phosphatidylinositol 3-kinase signaling and autophagy. PCYT1A monoubiquitination by SCF(FBXL2) and subsequent degradation regulates synthesis of phosphatidylcholine, which is utilized for formation of membranes and of pulmonary surfactant. The SCF(FBXL2) complex acts as a regulator of inflammation by mediating ubiquitination and degradation of TRAF proteins (TRAF1, TRAF2, TRAF3, TRAF4, TRAF5 and TRAF6). The SCF(FBXL2) complex acts as a negative regulator of the NLRP3 inflammasome by mediating ubiquitination and degradation of NLRP3. The protein is F-box/LRR-repeat protein 2 of Pongo abelii (Sumatran orangutan).